We begin with the raw amino-acid sequence, 96 residues long: LSFAANVVNARFDSTSFITQVLSNGDDVKSACCDTCLCTKSNPPTCRCVDVRETCHSACDSCICAYSNPPKCQCFDTHKFCYKACHNSEVEEVIKN.

The N-terminal stretch at 1–10 (LSFAANVVNA) is a signal peptide. A propeptide spanning residues 11 to 24 (RFDSTSFITQVLSN) is cleaved from the precursor. Cystine bridges form between Cys-32/Cys-85, Cys-33/Cys-48, Cys-36/Cys-81, Cys-38/Cys-46, Cys-55/Cys-62, Cys-59/Cys-74, and Cys-64/Cys-72. The propeptide at 88–96 (SEVEEVIKN) is removed in PSTI I.

It belongs to the Bowman-Birk serine protease inhibitor family. In terms of tissue distribution, seed.

Inhibitor of trypsin and of chymotrypsin. May function as a natural phytochemical defense against predators. In Pisum sativum (Garden pea), this protein is Seed trypsin/chymotrypsin inhibitor IVA (TI1236).